The sequence spans 531 residues: T-complex protein 1 subunit zeta (531 aa).

A2 carries the post-translational modification N-acetylalanine. K5 carries the post-translational modification N6-acetyllysine. G39 provides a ligand contact to ADP. An ATP-binding site is contributed by G39. Position 90 (D90) interacts with Mg(2+). ADP-binding residues include G91, T92, T93, S94, T158, and K159. 3 residues coordinate ATP: G91, T92, and T93. K199 carries the post-translational modification N6-acetyllysine. A Phosphoserine modification is found at S205. A Glycyl lysine isopeptide (Lys-Gly) (interchain with G-Cter in SUMO2) cross-link involves residue K251. K287, K365, K377, and K388 each carry N6-acetyllysine. A411 lines the ADP pocket. ATP is bound by residues A411, G412, D496, and K501. D496 lines the ADP pocket.

Belongs to the TCP-1 chaperonin family. As to quaternary structure, component of the chaperonin-containing T-complex (TRiC), a hexadecamer composed of two identical back-to-back stacked rings enclosing a protein folding chamber. Each ring is made up of eight different subunits: TCP1/CCT1, CCT2, CCT3, CCT4, CCT5, CCT6A/CCT6, CCT7, CCT8. Interacts with PACRG.

The protein resides in the cytoplasm. The catalysed reaction is ATP + H2O = ADP + phosphate + H(+). Functionally, component of the chaperonin-containing T-complex (TRiC), a molecular chaperone complex that assists the folding of actin, tubulin and other proteins upon ATP hydrolysis. The TRiC complex mediates the folding of WRAP53/TCAB1, thereby regulating telomere maintenance. In Oryctolagus cuniculus (Rabbit), this protein is T-complex protein 1 subunit zeta (CCT6).